The following is a 443-amino-acid chain: Histidinol dehydrogenase (443 aa).

NAD(+)-binding residues include tyrosine 127, glutamine 185, and asparagine 208. The substrate site is built by serine 234, glutamine 256, and histidine 259. Positions 256 and 259 each coordinate Zn(2+). Active-site proton acceptor residues include glutamate 323 and histidine 324. Residues histidine 324, aspartate 357, glutamate 411, and histidine 416 each contribute to the substrate site. Aspartate 357 is a binding site for Zn(2+). Histidine 416 is a Zn(2+) binding site.

Belongs to the histidinol dehydrogenase family. Zn(2+) serves as cofactor.

It carries out the reaction L-histidinol + 2 NAD(+) + H2O = L-histidine + 2 NADH + 3 H(+). Its pathway is amino-acid biosynthesis; L-histidine biosynthesis; L-histidine from 5-phospho-alpha-D-ribose 1-diphosphate: step 9/9. Catalyzes the sequential NAD-dependent oxidations of L-histidinol to L-histidinaldehyde and then to L-histidine. The polypeptide is Histidinol dehydrogenase (Photobacterium profundum (strain SS9)).